Reading from the N-terminus, the 678-residue chain is UvrABC system protein C (678 aa).

The GIY-YIG domain occupies 16–95 (VEPGVYRFRD…IKEFDPRFNI (80 aa)). The region spanning 208-243 (DRLIREMEQQMNAAAEELDFERAARLRDNIGAMRRA) is the UVR domain. A disordered region spans residues 477 to 508 (HLRDAEAAPEGRPEQGPRASARPEQGPRASAR). Positions 479-491 (RDAEAAPEGRPEQ) are enriched in basic and acidic residues.

It belongs to the UvrC family. As to quaternary structure, interacts with UvrB in an incision complex.

It is found in the cytoplasm. Its function is as follows. The UvrABC repair system catalyzes the recognition and processing of DNA lesions. UvrC both incises the 5' and 3' sides of the lesion. The N-terminal half is responsible for the 3' incision and the C-terminal half is responsible for the 5' incision. The sequence is that of UvrABC system protein C from Mycolicibacterium vanbaalenii (strain DSM 7251 / JCM 13017 / BCRC 16820 / KCTC 9966 / NRRL B-24157 / PYR-1) (Mycobacterium vanbaalenii).